The primary structure comprises 2176 residues: Nonribosomal peptide synthetase sirP (2176 aa).

Over residues 16–31 the composition is skewed to basic and acidic residues; the sequence is EGLTGDDHSPESRRDF. A disordered region spans residues 16 to 38; it reads EGLTGDDHSPESRRDFPMSQSSG. The segment at 51–434 is adenylation 1; it reads FERIASQFPE…LGRKDRVVKN (384 aa). The region spanning 534–610 is the Carrier 1 domain; it reads SSPSSNLYVV…RICDTLSATI (77 aa). The residue at position 571 (Ser571) is an O-(pantetheine 4'-phosphoryl)serine. Positions 643 to 1073 are condensation 1; the sequence is YMTAIQVNMI…MMNQLEINDL (431 aa). Residues 1094–1474 form an adenylation 2 region; it reads FEEVVDTWPD…GRIDNQVKVR (381 aa). The Carrier 2 domain occupies 1570–1646; the sequence is PIEGTTERII…DLALAIDKHI (77 aa). Ser1606 bears the O-(pantetheine 4'-phosphoryl)serine mark. The interval 1661 to 2070 is condensation 2; the sequence is QNTVLSHLEE…VQLMAAFRYL (410 aa). A Carrier 3 domain is found at 2106-2176; sequence QEMIDLVREA…TAELIAGAVE (71 aa). Ser2140 carries the O-(pantetheine 4'-phosphoryl)serine modification.

Belongs to the NRP synthetase family.

The protein operates within mycotoxin biosynthesis. Nonribosomal peptide synthetase; part of the gene cluster that mediates the biosynthesis of sirodesmin PL, an epipolythiodioxopiperazine (ETP) characterized by a disulfide bridged cyclic dipeptide and that acts as a phytotoxin which is involved in the blackleg didease of canola. SirD catalyzes the O-prenylation of L-tyrosine (L-Tyr) in the presence of dimethylallyl diphosphate (DMAPP) to yield 4-O-dimethylallyl-L-Tyr, and therefore represents probably the first pathway-specific enzyme in the biosynthesis of sirodesmin PL. 4-O-dimethylallyl-L-Tyr, then undergoes condensation with L-Ser in a reaction catalyzed by the non-ribosomal peptide synthase sirP to form the diketopiperazine (DKP) backbone. Further bishydroxylation of the DKP performed by the cytochrome P450 monooxygenase sirC leads to the production of the intermediate phomamide. This step is essential to form the reactive thiol group required for toxicity of sirodesmin PL. The next steps of sirodesmin biosynthesis are not well understood yet, but some predictions could be made from intermediate compounds identification. Phomamide is converted into phomalizarine via oxidation, probably by sirT. Further oxidation, methylation (by sirM or sirN) and reduction steps convert phomalizarine to deacetyl sirodesmin. Finally, acetyltransferase sirH probably acetylates deacetyl sirodesmin to produce sirodesmin PL. This is Nonribosomal peptide synthetase sirP from Leptosphaeria maculans (Blackleg fungus).